The following is a 29-amino-acid chain: Cytochrome c oxidase subunit 7A2, mitochondrial (29 aa).

N6-acetyllysine is present on lysine 10.

Belongs to the cytochrome c oxidase VIIa family. In terms of assembly, component of the cytochrome c oxidase (complex IV, CIV), a multisubunit enzyme composed of 14 subunits. The complex is composed of a catalytic core of 3 subunits MT-CO1, MT-CO2 and MT-CO3, encoded in the mitochondrial DNA, and 11 supernumerary subunits COX4I, COX5A, COX5B, COX6A, COX6B, COX6C, COX7A, COX7B, COX7C, COX8 and NDUFA4, which are encoded in the nuclear genome. The complex exists as a monomer or a dimer and forms supercomplexes (SCs) in the inner mitochondrial membrane with NADH-ubiquinone oxidoreductase (complex I, CI) and ubiquinol-cytochrome c oxidoreductase (cytochrome b-c1 complex, complex III, CIII), resulting in different assemblies (supercomplex SCI(1)III(2)IV(1) and megacomplex MCI(2)III(2)IV(2)). Interacts with PET100.

Its subcellular location is the mitochondrion inner membrane. It participates in energy metabolism; oxidative phosphorylation. Its function is as follows. Component of the cytochrome c oxidase, the last enzyme in the mitochondrial electron transport chain which drives oxidative phosphorylation. The respiratory chain contains 3 multisubunit complexes succinate dehydrogenase (complex II, CII), ubiquinol-cytochrome c oxidoreductase (cytochrome b-c1 complex, complex III, CIII) and cytochrome c oxidase (complex IV, CIV), that cooperate to transfer electrons derived from NADH and succinate to molecular oxygen, creating an electrochemical gradient over the inner membrane that drives transmembrane transport and the ATP synthase. Cytochrome c oxidase is the component of the respiratory chain that catalyzes the reduction of oxygen to water. Electrons originating from reduced cytochrome c in the intermembrane space (IMS) are transferred via the dinuclear copper A center (CU(A)) of subunit 2 and heme A of subunit 1 to the active site in subunit 1, a binuclear center (BNC) formed by heme A3 and copper B (CU(B)). The BNC reduces molecular oxygen to 2 water molecules using 4 electrons from cytochrome c in the IMS and 4 protons from the mitochondrial matrix. This is Cytochrome c oxidase subunit 7A2, mitochondrial (COX7A2) from Canis lupus familiaris (Dog).